The following is a 221-amino-acid chain: 7-cyano-7-deazaguanine synthase (221 aa).

12–22 (FSGGQDSTTCL) contacts ATP. The Zn(2+) site is built by Cys190, Cys199, Cys202, and Cys205.

Belongs to the QueC family. Homodimer. Requires Zn(2+) as cofactor.

It catalyses the reaction 7-carboxy-7-deazaguanine + NH4(+) + ATP = 7-cyano-7-deazaguanine + ADP + phosphate + H2O + H(+). It participates in purine metabolism; 7-cyano-7-deazaguanine biosynthesis. Functionally, catalyzes the ATP-dependent conversion of 7-carboxy-7-deazaguanine (CDG) to 7-cyano-7-deazaguanine (preQ(0)). This is 7-cyano-7-deazaguanine synthase from Clostridium novyi (strain NT).